An 80-amino-acid chain; its full sequence is RNA-binding protein Hfq (80 aa).

Residues 10–69 enclose the Sm domain; it reads DPFLNVLRKEHIPVSIYLVNGIKLQGHIDSFDQYVVLLRNSVTQMVYKHAISTIVPGKAV.

The protein belongs to the Hfq family. As to quaternary structure, homohexamer.

RNA chaperone that binds small regulatory RNA (sRNAs) and mRNAs to facilitate mRNA translational regulation in response to envelope stress, environmental stress and changes in metabolite concentrations. Also binds with high specificity to tRNAs. In Nitrosomonas eutropha (strain DSM 101675 / C91 / Nm57), this protein is RNA-binding protein Hfq.